Reading from the N-terminus, the 287-residue chain is Elongation factor Ts (287 aa).

The interval 80–83 is involved in Mg(2+) ion dislocation from EF-Tu; that stretch reads TDFL.

This sequence belongs to the EF-Ts family.

Its subcellular location is the cytoplasm. In terms of biological role, associates with the EF-Tu.GDP complex and induces the exchange of GDP to GTP. It remains bound to the aminoacyl-tRNA.EF-Tu.GTP complex up to the GTP hydrolysis stage on the ribosome. In Pseudomonas syringae pv. tomato (strain ATCC BAA-871 / DC3000), this protein is Elongation factor Ts.